A 205-amino-acid chain; its full sequence is Probable GTP-binding protein EngB (205 aa).

Residues N22–G195 form the EngB-type G domain. Residues G30 to S37, G57 to T61, D75 to G78, T142 to D145, and F174 to A176 contribute to the GTP site. 2 residues coordinate Mg(2+): S37 and T59.

It belongs to the TRAFAC class TrmE-Era-EngA-EngB-Septin-like GTPase superfamily. EngB GTPase family. Mg(2+) serves as cofactor.

Necessary for normal cell division and for the maintenance of normal septation. The chain is Probable GTP-binding protein EngB from Heliobacterium modesticaldum (strain ATCC 51547 / Ice1).